Reading from the N-terminus, the 306-residue chain is Protoheme IX farnesyltransferase (306 aa).

A run of 9 helical transmembrane segments spans residues 32-52 (VVQLIVFCAFIGMVLAVPGMP), 57-77 (WALMAVASAGIWLVAGAAAAF), 108-128 (LLFSALLCAAGSALLYWWVNP), 129-149 (LTMWLTFATFVGYAVIYTVIL), 157-177 (IVIGGASGAMPPVLGWAAMTG), 183-203 (ALILFLIIFLWTPPHFWALAL), 230-250 (VFLYTLILFAGCLMPFVYGMS), 252-272 (WIYLAAAVVLSAGFCLYGFRL), and 285-305 (FRFSLIHLSLLFAALLVDHYL).

This sequence belongs to the UbiA prenyltransferase family. Protoheme IX farnesyltransferase subfamily.

It localises to the cell inner membrane. It carries out the reaction heme b + (2E,6E)-farnesyl diphosphate + H2O = Fe(II)-heme o + diphosphate. It functions in the pathway porphyrin-containing compound metabolism; heme O biosynthesis; heme O from protoheme: step 1/1. Functionally, converts heme B (protoheme IX) to heme O by substitution of the vinyl group on carbon 2 of heme B porphyrin ring with a hydroxyethyl farnesyl side group. The sequence is that of Protoheme IX farnesyltransferase from Acidovorax ebreus (strain TPSY) (Diaphorobacter sp. (strain TPSY)).